The primary structure comprises 444 residues: ATP-dependent protease ATPase subunit HslU (444 aa).

Residues isoleucine 20 and glycine 62–glutamate 67 each bind ATP. A disordered region spans residues glutamate 130–glutamine 158. ATP-binding residues include aspartate 257, glutamate 322, and arginine 394.

The protein belongs to the ClpX chaperone family. HslU subfamily. A double ring-shaped homohexamer of HslV is capped on each side by a ring-shaped HslU homohexamer. The assembly of the HslU/HslV complex is dependent on binding of ATP.

Its subcellular location is the cytoplasm. ATPase subunit of a proteasome-like degradation complex; this subunit has chaperone activity. The binding of ATP and its subsequent hydrolysis by HslU are essential for unfolding of protein substrates subsequently hydrolyzed by HslV. HslU recognizes the N-terminal part of its protein substrates and unfolds these before they are guided to HslV for hydrolysis. This Bordetella parapertussis (strain 12822 / ATCC BAA-587 / NCTC 13253) protein is ATP-dependent protease ATPase subunit HslU.